A 141-amino-acid polypeptide reads, in one-letter code: Large ribosomal subunit protein uL11 (141 aa).

Belongs to the universal ribosomal protein uL11 family. Part of the ribosomal stalk of the 50S ribosomal subunit. Interacts with L10 and the large rRNA to form the base of the stalk. L10 forms an elongated spine to which L12 dimers bind in a sequential fashion forming a multimeric L10(L12)X complex. In terms of processing, one or more lysine residues are methylated.

Functionally, forms part of the ribosomal stalk which helps the ribosome interact with GTP-bound translation factors. The chain is Large ribosomal subunit protein uL11 from Streptococcus sanguinis (strain SK36).